The sequence spans 222 residues: N-(5'-phosphoribosyl)anthranilate isomerase (222 aa).

The protein belongs to the TrpF family.

The enzyme catalyses N-(5-phospho-beta-D-ribosyl)anthranilate = 1-(2-carboxyphenylamino)-1-deoxy-D-ribulose 5-phosphate. It functions in the pathway amino-acid biosynthesis; L-tryptophan biosynthesis; L-tryptophan from chorismate: step 3/5. In Gloeobacter violaceus (strain ATCC 29082 / PCC 7421), this protein is N-(5'-phosphoribosyl)anthranilate isomerase.